A 203-amino-acid chain; its full sequence is Proteasome subunit beta 2 (203 aa).

The propeptide at 1–9 is removed in mature form; by autocatalysis; the sequence is MGEEVSIGA. Catalysis depends on threonine 10, which acts as the Nucleophile.

This sequence belongs to the peptidase T1B family. As to quaternary structure, the 20S proteasome core is composed of 14 alpha and 14 beta subunits that assemble into four stacked heptameric rings, resulting in a barrel-shaped structure. The two inner rings, each composed of seven catalytic beta subunits, are sandwiched by two outer rings, each composed of seven alpha subunits. The catalytic chamber with the active sites is on the inside of the barrel. Has a gated structure, the ends of the cylinder being occluded by the N-termini of the alpha-subunits. Is capped at one or both ends by the proteasome regulatory ATPase, PAN.

The protein localises to the cytoplasm. It catalyses the reaction Cleavage of peptide bonds with very broad specificity.. The formation of the proteasomal ATPase PAN-20S proteasome complex, via the docking of the C-termini of PAN into the intersubunit pockets in the alpha-rings, triggers opening of the gate for substrate entry. Interconversion between the open-gate and close-gate conformations leads to a dynamic regulation of the 20S proteasome proteolysis activity. In terms of biological role, component of the proteasome core, a large protease complex with broad specificity involved in protein degradation. In Pyrobaculum calidifontis (strain DSM 21063 / JCM 11548 / VA1), this protein is Proteasome subunit beta 2.